The chain runs to 34 residues: MSDIN-like toxin proprotein 4 (34 aa).

A propeptide spanning residues 1–10 (MSDINATRLP) is cleaved from the precursor. The cyclopeptide (Val-Pro) cross-link spans 11–17 (VWIGYSP). The propeptide occupies 18 to 34 (CVGDDCIALLTRGEGLC).

Belongs to the MSDIN fungal toxin family. Processed by the macrocyclase-peptidase enzyme POPB to yield a toxic cyclic heptapeptide. POPB first removes 10 residues from the N-terminus. Conformational trapping of the remaining peptide forces the enzyme to release this intermediate rather than proceed to macrocyclization. The enzyme rebinds the remaining peptide in a different conformation and catalyzes macrocyclization of the N-terminal 7 residues. Expressed in basidiocarps.

Its function is as follows. Probable toxin that belongs to the MSDIN-like toxin family responsible for a large number of food poisoning cases and deaths. In Amanita exitialis (Guangzhou destroying angel), this protein is MSDIN-like toxin proprotein 4.